The primary structure comprises 106 residues: UPF0145 protein Athe_0545 (106 aa).

This sequence belongs to the UPF0145 family.

In Caldicellulosiruptor bescii (strain ATCC BAA-1888 / DSM 6725 / KCTC 15123 / Z-1320) (Anaerocellum thermophilum), this protein is UPF0145 protein Athe_0545.